A 608-amino-acid polypeptide reads, in one-letter code: Serine/threonine-protein kinase ROP17 (608 aa).

The first 21 residues, 1 to 21, serve as a signal peptide directing secretion; the sequence is MELVLCFVIITISGVIRESSA. Residue Asn-76 is glycosylated (N-linked (GlcNAc...) asparagine). The Protein kinase domain maps to 283-579; sequence LKKRGFLGGG…QQALEQFSLL (297 aa). ATP-binding positions include 289–297 and Lys-312; that span reads LGGGGFGLV. The active-site Proton acceptor is the Asp-436.

It belongs to the protein kinase superfamily. Ser/Thr protein kinase family. In terms of assembly, interacts with ROP5; interaction with ROP5 does not affect kinase activity. Interacts with human BCL2; the interaction probably promotes BCL2 phosphorylation and degradation.

It localises to the secreted. Its subcellular location is the cytoplasmic vesicle. The protein localises to the secretory vesicle. It is found in the rhoptry. The protein resides in the parasitophorous vacuole membrane. The enzyme catalyses L-threonyl-[protein] + ATP = O-phospho-L-threonyl-[protein] + ADP + H(+). The catalysed reaction is L-seryl-[protein] + ATP = O-phospho-L-seryl-[protein] + ADP + H(+). Its function is as follows. Protein kinase. Virulence factor. Promotes migration of Toxoplasma-infected macrophages through collagen matrix, facilitating parasite transport through tissues and systemic dissemination. Plays a role in the translocation of dense granule effectors, such as GRA16 and GRA24, across the parasitophorous vacuole membrane in Toxoplasma-infected host cells. Phosphorylates mouse IRGB6 (TGTP1/TGTP2), an immunity-related GTPase (IRG) that protects mice from infection by certain intracellular pathogens; the phosphorylation leads to the disassembly of IRGB6 polymers into monomers and dimers. May modulate gene expression in human cells. Promotes autophagy in human cells via modulation of the BCL2-BECN1 pathway. This Toxoplasma gondii protein is Serine/threonine-protein kinase ROP17.